The chain runs to 207 residues: Transcriptional regulatory protein RcsA (207 aa).

Residues Leu-131–Glu-196 enclose the HTH luxR-type domain. Positions Thr-155–Gly-174 form a DNA-binding region, H-T-H motif.

This sequence belongs to the RcsA family.

Component of the Rcs signaling system, which controls transcription of numerous genes. Binds to DNA to regulate expression of genes. The sequence is that of Transcriptional regulatory protein RcsA from Klebsiella aerogenes (Enterobacter aerogenes).